A 307-amino-acid polypeptide reads, in one-letter code: Olfactory receptor 12D2 (307 aa).

The Extracellular portion of the chain corresponds to 1-23 (MLNTTSVTEFLLLGVTDIQELQP). The N-linked (GlcNAc...) asparagine glycan is linked to Asn-3. A helical transmembrane segment spans residues 24–44 (FLFVVFLTIYFISVTGNGAVL). Residues 45 to 52 (MIVISDPR) are Cytoplasmic-facing. A helical transmembrane segment spans residues 53–73 (LHSLMYFFLGNLSYLDICYST). Topologically, residues 74 to 97 (VTLPKMLQNFLSTHKAISFLGCIS) are extracellular. An intrachain disulfide couples Cys-95 to Cys-187. The chain crosses the membrane as a helical span at residues 98 to 118 (QLHFFHSLGSTESMLFAVMAF). Residues 119–137 (DLSVAICKPLRYTVIMNPQ) are Cytoplasmic-facing. A helical transmembrane segment spans residues 138 to 158 (LCTQMAITIWVIGFFHALLHS). Residues 159 to 195 (VMTSRLNFCGSNRIHHFLCDIKPLLKLACGNTELNQW) lie on the Extracellular side of the membrane. The helical transmembrane segment at 196 to 215 (LLSTVTGTIAMGPFFLTLLS) threads the bilayer. The Cytoplasmic portion of the chain corresponds to 216 to 236 (YFYIITYLFFKTRSCSMLCKA). A helical membrane pass occupies residues 237 to 257 (LSTCASHFMVVILFYAPVLFT). The Extracellular portion of the chain corresponds to 258-270 (YIHPALESFMDQD). The chain crosses the membrane as a helical span at residues 271-291 (RIVAIMYTVVTPVLNPLIYTL). At 292–307 (RNKEVKGALGRVIRRL) the chain is on the cytoplasmic side.

This sequence belongs to the G-protein coupled receptor 1 family.

It localises to the cell membrane. Odorant receptor. This is Olfactory receptor 12D2 (OR12D2) from Homo sapiens (Human).